The sequence spans 128 residues: Small ribosomal subunit protein eS8 (128 aa).

This sequence belongs to the eukaryotic ribosomal protein eS8 family. As to quaternary structure, part of the 30S ribosomal subunit.

The chain is Small ribosomal subunit protein eS8 from Methanococcus aeolicus (strain ATCC BAA-1280 / DSM 17508 / OCM 812 / Nankai-3).